We begin with the raw amino-acid sequence, 270 residues long: Plasmanylethanolamine desaturase 1 (270 aa).

Helical transmembrane passes span 47-67 (WCSV…LLLL), 74-94 (PLVI…SGLV), and 161-181 (ALEQ…FGTF). Residues 186-190 (HKWSH) carry the Histidine box-1 motif. Positions 213–217 (HHRIH) match the Histidine box-2 motif.

This sequence belongs to the fatty acid desaturase CarF family.

The protein resides in the endoplasmic reticulum membrane. The enzyme catalyses a 1-(1,2-saturated alkyl)-2-acyl-sn-glycero-3-phosphoethanolamine + 2 Fe(II)-[cytochrome b5] + O2 + 2 H(+) = a 1-O-(1Z-alkenyl)-2-acyl-sn-glycero-3-phosphoethanolamine + 2 Fe(III)-[cytochrome b5] + 2 H2O. It catalyses the reaction a 1-O-hexadecyl-2-acyl-sn-glycero-3-phosphoethanolamine + 2 Fe(II)-[cytochrome b5] + O2 + 2 H(+) = a 1-O-(1Z-hexadecenyl)-2-acyl-sn-glycero-3-phosphoethanolamine + 2 Fe(III)-[cytochrome b5] + 2 H2O. It carries out the reaction a 1-O-octadecyl-2-acyl-sn-glycero-3-phosphoethanolamine + 2 Fe(II)-[cytochrome b5] + O2 + 2 H(+) = a 1-O-(1Z-octadecenyl)-2-acyl-sn-glycero-3-phosphoethanolamine + 2 Fe(III)-[cytochrome b5] + 2 H2O. The catalysed reaction is a 1-O-(9Z-octadecenyl)-2-acyl-sn-glycero-3-phosphoethanolamine + 2 Fe(II)-[cytochrome b5] + O2 + 2 H(+) = a 1-O-(1Z,9Z-octadecadienyl)-2-acyl-sn-glycero-3-phosphoethanolamine + 2 Fe(III)-[cytochrome b5] + 2 H2O. The protein operates within lipid metabolism; fatty acid metabolism. Its function is as follows. Plasmanylethanolamine desaturase involved in plasmalogen biogenesis in the endoplasmic reticulum membrane. Plasmalogens are glycerophospholipids with a hydrocarbon chain linked by a vinyl ether bond at the glycerol sn-1 position, and are involved in antioxidative and signaling mechanisms. The sequence is that of Plasmanylethanolamine desaturase 1 from Homo sapiens (Human).